A 579-amino-acid chain; its full sequence is Alpha-longipinene synthase (579 aa).

Residues D332, D336, D476, and N484 each contribute to the Mg(2+) site. The DDXXD motif signature appears at 332-336 (DDLYD).

This sequence belongs to the terpene synthase family. Tpsd subfamily. Mg(2+) serves as cofactor. Requires Mn(2+) as cofactor.

It catalyses the reaction (2E,6E)-farnesyl diphosphate = alpha-longipinene + diphosphate. It participates in sesquiterpene biosynthesis. It functions in the pathway terpene metabolism; oleoresin biosynthesis. Terpene synthase (TPS) involved in the biosynthesis of sesquiterpene natural products included in conifer oleoresin secretions and volatile emissions; these compounds contribute to biotic and abiotic stress defense against herbivores and pathogens. Catalyzes the conversion of (2E,6E)-farnesyl diphosphate (FPP) to alpha-longipinene. This is Alpha-longipinene synthase from Picea sitchensis (Sitka spruce).